The chain runs to 215 residues: Pyrrolidone-carboxylate peptidase (215 aa).

Residues E80, C143, and H167 contribute to the active site.

The protein belongs to the peptidase C15 family. As to quaternary structure, homotetramer.

The protein resides in the cytoplasm. The enzyme catalyses Release of an N-terminal pyroglutamyl group from a polypeptide, the second amino acid generally not being Pro.. Functionally, removes 5-oxoproline from various penultimate amino acid residues except L-proline. In Pectobacterium atrosepticum (strain SCRI 1043 / ATCC BAA-672) (Erwinia carotovora subsp. atroseptica), this protein is Pyrrolidone-carboxylate peptidase.